A 187-amino-acid chain; its full sequence is Large ribosomal subunit protein uL10 (187 aa).

The protein belongs to the universal ribosomal protein uL10 family. Part of the ribosomal stalk of the 50S ribosomal subunit. The N-terminus interacts with L11 and the large rRNA to form the base of the stalk. The C-terminus forms an elongated spine to which L12 dimers bind in a sequential fashion forming a multimeric L10(L12)X complex.

In terms of biological role, forms part of the ribosomal stalk, playing a central role in the interaction of the ribosome with GTP-bound translation factors. The sequence is that of Large ribosomal subunit protein uL10 from Roseiflexus castenholzii (strain DSM 13941 / HLO8).